The chain runs to 408 residues: ORC1-type DNA replication protein 15 (408 aa).

ATP-binding positions include 60–64, Y208, and R220; that span reads VGKTA.

The protein belongs to the CDC6/cdc18 family.

In terms of biological role, involved in regulation of DNA replication. The protein is ORC1-type DNA replication protein 15 (cdc6o) of Haloarcula marismortui (strain ATCC 43049 / DSM 3752 / JCM 8966 / VKM B-1809) (Halobacterium marismortui).